The primary structure comprises 708 residues: ABC transporter G family member 18 (708 aa).

The ABC transporter domain maps to 75–317 (RRRFDFSRRK…FSSFGRPIPE (243 aa)). ATP is bound at residue 109–116 (GGSGAGKS). One can recognise an ABC transmembrane type-2 domain in the interval 402–612 (AETFILAKRY…PYEAVLINEF (211 aa)). The next 7 helical transmembrane spans lie at 421-441 (LIGM…TVYW), 456-476 (FFAF…PVFI), 508-528 (LLAL…LSGG), 537-557 (LIIY…SGLI), 560-580 (VMMS…LGGF), 589-609 (LYWI…AVLI), and 681-701 (LWIT…SLLF).

This sequence belongs to the ABC transporter superfamily. ABCG family. Eye pigment precursor importer (TC 3.A.1.204) subfamily.

The protein resides in the membrane. This Arabidopsis thaliana (Mouse-ear cress) protein is ABC transporter G family member 18 (ABCG18).